A 353-amino-acid polypeptide reads, in one-letter code: Small ribosomal subunit protein uS2 (353 aa).

Residues 256-353 are disordered; it reads DTDEQSSAAN…TPAESTDEQA (98 aa). 2 stretches are compositionally biased toward low complexity: residues 263-311 and 321-339; these read AANT…AEAP and ESAT…TPAE. Residues 340–353 show a composition bias toward acidic residues; that stretch reads AEAETPAESTDEQA.

The protein belongs to the universal ribosomal protein uS2 family.

This Beutenbergia cavernae (strain ATCC BAA-8 / DSM 12333 / CCUG 43141 / JCM 11478 / NBRC 16432 / NCIMB 13614 / HKI 0122) protein is Small ribosomal subunit protein uS2.